Reading from the N-terminus, the 74-residue chain is Acyl carrier protein (74 aa).

Residues 1–73 (MAVFEKVQEI…DLVAYVEEKS (73 aa)) enclose the Carrier domain. S35 carries the O-(pantetheine 4'-phosphoryl)serine modification.

This sequence belongs to the acyl carrier protein (ACP) family. 4'-phosphopantetheine is transferred from CoA to a specific serine of apo-ACP by AcpS. This modification is essential for activity because fatty acids are bound in thioester linkage to the sulfhydryl of the prosthetic group.

It localises to the cytoplasm. It participates in lipid metabolism; fatty acid biosynthesis. In terms of biological role, carrier of the growing fatty acid chain in fatty acid biosynthesis. This Streptococcus pyogenes serotype M1 protein is Acyl carrier protein.